The sequence spans 493 residues: uncharacterized protein (493 aa).

Residues 96-124 form a disordered region; the sequence is TTVAKASPPPAKPASAPTEITWKGSPQFT.

This is an uncharacterized protein from Caulobacter vibrioides (strain ATCC 19089 / CIP 103742 / CB 15) (Caulobacter crescentus).